Reading from the N-terminus, the 427-residue chain is 3-phosphoshikimate 1-carboxyvinyltransferase (427 aa).

Residues Lys23, Ser24, and Arg28 each contribute to the 3-phosphoshikimate site. Lys23 contributes to the phosphoenolpyruvate binding site. Phosphoenolpyruvate contacts are provided by Gly97 and Arg125. 3-phosphoshikimate is bound by residues Ser170, Ser171, Gln172, Ser198, Asp314, Asn337, and Lys341. Gln172 is a phosphoenolpyruvate binding site. The active-site Proton acceptor is Asp314. Positions 345, 387, and 412 each coordinate phosphoenolpyruvate.

Belongs to the EPSP synthase family. Monomer.

The protein localises to the cytoplasm. The catalysed reaction is 3-phosphoshikimate + phosphoenolpyruvate = 5-O-(1-carboxyvinyl)-3-phosphoshikimate + phosphate. It functions in the pathway metabolic intermediate biosynthesis; chorismate biosynthesis; chorismate from D-erythrose 4-phosphate and phosphoenolpyruvate: step 6/7. Its function is as follows. Catalyzes the transfer of the enolpyruvyl moiety of phosphoenolpyruvate (PEP) to the 5-hydroxyl of shikimate-3-phosphate (S3P) to produce enolpyruvyl shikimate-3-phosphate and inorganic phosphate. The chain is 3-phosphoshikimate 1-carboxyvinyltransferase from Buchnera aphidicola subsp. Acyrthosiphon pisum (strain Tuc7).